The primary structure comprises 663 residues: UvrABC system protein B (663 aa).

Residues methionine 1–phenylalanine 10 show a composition bias toward basic and acidic residues. A disordered region spans residues methionine 1–proline 23. The Helicase ATP-binding domain maps to aspartate 31–arginine 418. Glycine 44–threonine 51 serves as a coordination point for ATP. A Beta-hairpin motif is present at residues tyrosine 97–valine 120. A Helicase C-terminal domain is found at glutamine 435–isoleucine 597. The UVR domain maps to lysine 627 to methionine 662.

Belongs to the UvrB family. As to quaternary structure, forms a heterotetramer with UvrA during the search for lesions. Interacts with UvrC in an incision complex.

It localises to the cytoplasm. Functionally, the UvrABC repair system catalyzes the recognition and processing of DNA lesions. A damage recognition complex composed of 2 UvrA and 2 UvrB subunits scans DNA for abnormalities. Upon binding of the UvrA(2)B(2) complex to a putative damaged site, the DNA wraps around one UvrB monomer. DNA wrap is dependent on ATP binding by UvrB and probably causes local melting of the DNA helix, facilitating insertion of UvrB beta-hairpin between the DNA strands. Then UvrB probes one DNA strand for the presence of a lesion. If a lesion is found the UvrA subunits dissociate and the UvrB-DNA preincision complex is formed. This complex is subsequently bound by UvrC and the second UvrB is released. If no lesion is found, the DNA wraps around the other UvrB subunit that will check the other stand for damage. This Streptococcus pyogenes serotype M18 (strain MGAS8232) protein is UvrABC system protein B.